A 119-amino-acid chain; its full sequence is Large ribosomal subunit protein bL20 (119 aa).

Belongs to the bacterial ribosomal protein bL20 family.

Functionally, binds directly to 23S ribosomal RNA and is necessary for the in vitro assembly process of the 50S ribosomal subunit. It is not involved in the protein synthesizing functions of that subunit. The polypeptide is Large ribosomal subunit protein bL20 (Buchnera aphidicola subsp. Cinara cedri (strain Cc)).